A 503-amino-acid chain; its full sequence is Probable cytosol aminopeptidase (503 aa).

Positions 270 and 275 each coordinate Mn(2+). Residue lysine 282 is part of the active site. Residues aspartate 293, aspartate 352, and glutamate 354 each contribute to the Mn(2+) site. The active site involves arginine 356.

Belongs to the peptidase M17 family. Mn(2+) is required as a cofactor.

The protein resides in the cytoplasm. The catalysed reaction is Release of an N-terminal amino acid, Xaa-|-Yaa-, in which Xaa is preferably Leu, but may be other amino acids including Pro although not Arg or Lys, and Yaa may be Pro. Amino acid amides and methyl esters are also readily hydrolyzed, but rates on arylamides are exceedingly low.. It carries out the reaction Release of an N-terminal amino acid, preferentially leucine, but not glutamic or aspartic acids.. Functionally, presumably involved in the processing and regular turnover of intracellular proteins. Catalyzes the removal of unsubstituted N-terminal amino acids from various peptides. This Escherichia fergusonii (strain ATCC 35469 / DSM 13698 / CCUG 18766 / IAM 14443 / JCM 21226 / LMG 7866 / NBRC 102419 / NCTC 12128 / CDC 0568-73) protein is Probable cytosol aminopeptidase.